A 135-amino-acid polypeptide reads, in one-letter code: Small ribosomal subunit protein bS6 (135 aa).

The disordered stretch occupies residues 96 to 135; that stretch reads HAEGPSIQMQKRDERERGDRGDRSDRGDRGDRGDRGGFRR. Residues 105–135 are compositionally biased toward basic and acidic residues; that stretch reads QKRDERERGDRGDRSDRGDRGDRGDRGGFRR.

Belongs to the bacterial ribosomal protein bS6 family.

In terms of biological role, binds together with bS18 to 16S ribosomal RNA. This is Small ribosomal subunit protein bS6 from Cereibacter sphaeroides (strain ATCC 17029 / ATH 2.4.9) (Rhodobacter sphaeroides).